We begin with the raw amino-acid sequence, 612 residues long: Chaperone protein DnaK (612 aa).

Thr-174 is modified (phosphothreonine; by autocatalysis). Positions 578–612 (GAQAGAQGQGAAGGQKQDGNVYDADYKVVDDDKKE) are disordered. The span at 601–612 (ADYKVVDDDKKE) shows a compositional bias: basic and acidic residues.

Belongs to the heat shock protein 70 family.

Acts as a chaperone. This Moorella thermoacetica (strain ATCC 39073 / JCM 9320) protein is Chaperone protein DnaK.